The primary structure comprises 230 residues: Prolactin-3D1 (230 aa).

An N-terminal signal peptide occupies residues 1 to 29 (MQLTLTLSRASGMQLFLLVSSLLLWEKVA). Cystine bridges form between Cys-81-Cys-200 and Cys-217-Cys-225. Asn-109 and Asn-158 each carry an N-linked (GlcNAc...) asparagine glycan.

The protein belongs to the somatotropin/prolactin family.

It is found in the secreted. The protein is Prolactin-3D1 (Prl3d1) of Rattus norvegicus (Rat).